The sequence spans 389 residues: Gastricsin (389 aa).

Positions 1–16 (MKWMVVVLLCLQLLEA) are cleaved as a signal peptide. Residues 17–59 (KVVKVPLKKLKSLRETMKEKGLLEEFLKNHKYDPAQKYRYTDF) constitute a propeptide, activation peptide. The region spanning 73 to 386 (YFGEISIGTP…DMGNNRVGFA (314 aa)) is the Peptidase A1 domain. Aspartate 91 is an active-site residue. 2 disulfides stabilise this stretch: cysteine 104–cysteine 109 and cysteine 268–cysteine 272. Residue aspartate 277 is part of the active site. Cysteine 311 and cysteine 344 are disulfide-bonded.

This sequence belongs to the peptidase A1 family.

The protein localises to the secreted. It catalyses the reaction More restricted specificity than pepsin A, but shows preferential cleavage at Tyr-|-Xaa bonds. High activity on hemoglobin.. Hydrolyzes a variety of proteins. This Rhinolophus ferrumequinum (Greater horseshoe bat) protein is Gastricsin (PGC).